A 31-amino-acid chain; its full sequence is MPTITSYFGFLLAALTVTSALFIGLSKIRLI.

Residues 4 to 26 (ITSYFGFLLAALTVTSALFIGLS) form a helical membrane-spanning segment.

This sequence belongs to the PetL family. The 4 large subunits of the cytochrome b6-f complex are cytochrome b6, subunit IV (17 kDa polypeptide, PetD), cytochrome f and the Rieske protein, while the 4 small subunits are PetG, PetL, PetM and PetN. The complex functions as a dimer.

It is found in the plastid. It localises to the chloroplast thylakoid membrane. Functionally, component of the cytochrome b6-f complex, which mediates electron transfer between photosystem II (PSII) and photosystem I (PSI), cyclic electron flow around PSI, and state transitions. PetL is important for photoautotrophic growth as well as for electron transfer efficiency and stability of the cytochrome b6-f complex. The chain is Cytochrome b6-f complex subunit 6 from Daucus carota (Wild carrot).